The chain runs to 386 residues: Pepsin A (386 aa).

The first 15 residues, 1–15 (MKWLLLISLVALSEC), serve as a signal peptide directing secretion. Positions 16-60 (AIVKVPLVRKKSLRQNLIEHGLLNDFLKNQSPNPASKYFPQEPTV) are cleaved as a propeptide — activation peptide. The 310-residue stretch at 74–383 (YFGTIGIGTP…DRANNQVGLA (310 aa)) folds into the Peptidase A1 domain. The active site involves Asp-92. 2 cysteine pairs are disulfide-bonded: Cys-105-Cys-110 and Cys-266-Cys-270. Residue Asp-275 is part of the active site. Cys-309 and Cys-342 are disulfide-bonded.

It belongs to the peptidase A1 family.

The protein resides in the secreted. The enzyme catalyses Preferential cleavage: hydrophobic, preferably aromatic, residues in P1 and P1' positions. Cleaves 1-Phe-|-Val-2, 4-Gln-|-His-5, 13-Glu-|-Ala-14, 14-Ala-|-Leu-15, 15-Leu-|-Tyr-16, 16-Tyr-|-Leu-17, 23-Gly-|-Phe-24, 24-Phe-|-Phe-25 and 25-Phe-|-Tyr-26 bonds in the B chain of insulin.. Functionally, shows particularly broad specificity; although bonds involving phenylalanine and leucine are preferred, many others are also cleaved to some extent. The chain is Pepsin A (PGA) from Canis lupus familiaris (Dog).